Here is a 981-residue protein sequence, read N- to C-terminus: MASSPWGCVCGLLLLLLPLLGTGPALGRGFPRPLENSEIPMIPGAHPKGSVGSEPQAFDVFPENPRADSHRNSDVRHAPAEEMPEKPVASPLGPALYGPKAAQGAQRERLPVTDDLQMAQGPSSHGWTGPLDSQELLQQEAVAPHPVGHPHLTFIPTTPRRQLRVATVPPSLQHEGQEGQWPPRDEGLKAKTKSRVPPTSPSDHQGPPHTLVSHSGTVKRPVLEGQGGFEEHLQEAAQGPHFTQQDPAAPDVGSVPPVEVVYSQEPGAQPDLALARSLPPAEELPVETPKRAGAEVSWEVSSPGPPPKQADLPDAKDSPGPQPTDPPASEAPDRPSKPERAAMNGADPISPQRVRGAVEAPGTPKSLIPGPSDPGPAVNRTESPMGALQPDEAEEWPGRPQSHPPAPPVQAPSTSRRGLIRVTTQRALGQPPPPEPTASSMASAPASSPPANATAPPLRWGPLRRVLSFSWELHVYGVGVLFLLPALLALAALAAAPAGPRLALVAAVLVLVASALRSAYMLTDPYGSQARLGVRGGLVLYNLPFPLLLTALAALTLLGLGAGLPPPLQNPLLLGAVALVHGVGLLATDLLSTWSVLNLLTQGLSCAWGAAVALGTLCLCRRRLLDGPRGWDASPGPRLLAVAGALGLLASGLQLAAALWLYPGPGRVGRFSWAWWGVHFWLRLLELTWALALALAAVAAARPRPPTEHACWAKLMRLACPAPSGKSEVPERPNNCYAGPSNVGAGSLDISKSLIRNPAESGQLATPSSGAWGSAASLGRGPQGGPGLSRNGVGPAPSLSELDLRPPSPINLSRSIDAALFREHLVRDSVFQRCGLRGLASPPPGGALRPRRGSHPKAELDDAGSSLLRGRCRSLSDVRVRGPVPQHVVEAPDGAAAAASGSSLDSFSRGSLKISWNPWRHGLSSVDSLPLDELPSTVQLLPAPTPAPDSTAARQGDGQGEVQPRGKPGESRSASSDTIEL.

The signal sequence occupies residues M1–G27. Residues R28–H474 are Extracellular-facing. Disordered regions lie at residues P43 to R107 and P169 to P457. Residues P65–E85 are compositionally biased toward basic and acidic residues. The interval S297–S302 is O-glycosylated at one site. Residue S329 is glycosylated (O-linked (GalNAc...) serine). Residues A331–R340 show a composition bias toward basic and acidic residues. An O-linked (GalNAc...) threonine glycan is attached at T363. N-linked (GlcNAc...) asparagine glycosylation occurs at N379. Residues A411 to A427 show a composition bias toward polar residues. Residues T437 to P457 are compositionally biased toward low complexity. A helical membrane pass occupies residues V475–A495. Over A496 to R501 the chain is Cytoplasmic. The chain crosses the membrane as a helical span at residues L502–L522. At T523 to N542 the chain is on the extracellular side. A helical transmembrane segment spans residues L543–G563. Residues L564–N570 are Cytoplasmic-facing. A helical transmembrane segment spans residues P571–L591. Residues S592–N598 are Extracellular-facing. A helical membrane pass occupies residues L599–L619. The Cytoplasmic segment spans residues C620–R638. Residues L639–L659 form a helical membrane-spanning segment. Residues W660–H679 lie on the Extracellular side of the membrane. The chain crosses the membrane as a helical span at residues F680–A700. Over A701 to L981 the chain is Cytoplasmic. The segment at A759–P807 is disordered. Over residues A765–R780 the composition is skewed to low complexity. S777 bears the Phosphoserine mark. R780 carries the omega-N-methylarginine modification. Phosphoserine occurs at positions 789, 798, 808, 815, 854, 874, 902, 903, and 911. Residues L836–S865 form a disordered region. Residues T937–L981 form a disordered region. A compositionally biased stretch (polar residues) spans R972–L981.

The protein localises to the membrane. In Homo sapiens (Human), this protein is Proline-rich transmembrane protein 3 (PRRT3).